The chain runs to 1072 residues: Translation initiation factor IF-2 (1072 aa).

Disordered regions lie at residues 55-369 and 426-452; these read ILDK…TGTA and ELVD…VSKQ. 4 stretches are compositionally biased toward low complexity: residues 91-100, 108-118, 126-179, and 186-212; these read AEASQAAEPA, EPATFAAEEPV, APRA…AEVA, and EAPQ…PSVQ. The span at 218-230 shows a compositional bias: pro residues; that stretch reads PQPPPRSPVPPAV. Residues 231–245 are compositionally biased toward low complexity; sequence RTPSSTSSSATVVSR. Residues 253–307 are compositionally biased toward gly residues; it reads QRGGPGGGRPGGPGGPGGRPGGPGGPGGRPGGPGGPGGRPGGPGGPGGRPGGPGG. Residues 426-436 are compositionally biased toward basic and acidic residues; sequence ELVDVSKNKER. The tr-type G domain maps to 570–737; sequence PRPPVVAIMG…NLALQAEVLE (168 aa). The interval 579–586 is G1; that stretch reads GHVDHGKT. 579-586 is a GTP binding site; sequence GHVDHGKT. The interval 604 to 608 is G2; the sequence is GITQH. Residues 625–628 form a G3 region; it reads DTPG. GTP contacts are provided by residues 625-629 and 679-682; these read DTPGH and NKMD. The tract at residues 679-682 is G4; sequence NKMD. The segment at 715 to 717 is G5; the sequence is SAK.

Belongs to the TRAFAC class translation factor GTPase superfamily. Classic translation factor GTPase family. IF-2 subfamily.

The protein resides in the cytoplasm. Its function is as follows. One of the essential components for the initiation of protein synthesis. Protects formylmethionyl-tRNA from spontaneous hydrolysis and promotes its binding to the 30S ribosomal subunits. Also involved in the hydrolysis of GTP during the formation of the 70S ribosomal complex. This chain is Translation initiation factor IF-2, found in Myxococcus xanthus (strain DK1622).